The following is a 350-amino-acid chain: Peroxidase 24 (350 aa).

A signal peptide spans 1 to 27; that stretch reads MANKSLEIRFLFPLVLFLVVKLLCVDG. 4 disulfide bridges follow: Cys55/Cys135, Cys88/Cys93, Cys141/Cys346, and Cys221/Cys253. A glycan (N-linked (GlcNAc...) asparagine) is linked at Asn73. His86 acts as the Proton acceptor in catalysis. Ca(2+)-binding residues include Asp87, Val90, Gly92, Asp94, and Ser96. Position 184 (Pro184) interacts with substrate. An N-linked (GlcNAc...) asparagine glycan is attached at Asn189. His214 provides a ligand contact to heme b. Residue Thr215 coordinates Ca(2+). Asn230 is a glycosylation site (N-linked (GlcNAc...) asparagine). Positions 269 and 277 each coordinate Ca(2+).

It belongs to the peroxidase family. Classical plant (class III) peroxidase subfamily. Heme b serves as cofactor. Ca(2+) is required as a cofactor.

The protein localises to the secreted. The enzyme catalyses 2 a phenolic donor + H2O2 = 2 a phenolic radical donor + 2 H2O. Removal of H(2)O(2), oxidation of toxic reductants, biosynthesis and degradation of lignin, suberization, auxin catabolism, response to environmental stresses such as wounding, pathogen attack and oxidative stress. These functions might be dependent on each isozyme/isoform in each plant tissue. The protein is Peroxidase 24 (PER24) of Arabidopsis thaliana (Mouse-ear cress).